Reading from the N-terminus, the 326-residue chain is N-acetyl-gamma-glutamyl-phosphate reductase (326 aa).

C155 is a catalytic residue.

It belongs to the NAGSA dehydrogenase family. Type 1 subfamily.

It localises to the cytoplasm. It carries out the reaction N-acetyl-L-glutamate 5-semialdehyde + phosphate + NADP(+) = N-acetyl-L-glutamyl 5-phosphate + NADPH + H(+). The protein operates within amino-acid biosynthesis; L-arginine biosynthesis; N(2)-acetyl-L-ornithine from L-glutamate: step 3/4. Its function is as follows. Catalyzes the NADPH-dependent reduction of N-acetyl-5-glutamyl phosphate to yield N-acetyl-L-glutamate 5-semialdehyde. The protein is N-acetyl-gamma-glutamyl-phosphate reductase of Shewanella oneidensis (strain ATCC 700550 / JCM 31522 / CIP 106686 / LMG 19005 / NCIMB 14063 / MR-1).